The following is a 592-amino-acid chain: Aspartate--tRNA(Asp/Asn) ligase (592 aa).

Glu175 serves as a coordination point for L-aspartate. The tract at residues Gln199–Lys202 is aspartate. Arg221 lines the L-aspartate pocket. ATP-binding positions include Arg221–Glu223 and Gln230. His447 is an L-aspartate binding site. Position 481 (Glu481) interacts with ATP. Arg488 is an L-aspartate binding site. Gly533–Arg536 contacts ATP.

The protein belongs to the class-II aminoacyl-tRNA synthetase family. Type 1 subfamily. As to quaternary structure, homodimer.

The protein resides in the cytoplasm. The catalysed reaction is tRNA(Asx) + L-aspartate + ATP = L-aspartyl-tRNA(Asx) + AMP + diphosphate. Its function is as follows. Aspartyl-tRNA synthetase with relaxed tRNA specificity since it is able to aspartylate not only its cognate tRNA(Asp) but also tRNA(Asn). Reaction proceeds in two steps: L-aspartate is first activated by ATP to form Asp-AMP and then transferred to the acceptor end of tRNA(Asp/Asn). This chain is Aspartate--tRNA(Asp/Asn) ligase, found in Dictyoglomus turgidum (strain DSM 6724 / Z-1310).